Here is a 142-residue protein sequence, read N- to C-terminus: Glia maturation factor beta (142 aa).

Serine 2 carries the post-translational modification N-acetylserine. The region spanning 4–139 is the ADF-H domain; sequence SLVVCDVAED…TEEWLREKLG (136 aa).

Belongs to the actin-binding proteins ADF family. GMF subfamily. In terms of processing, phosphorylated; stimulated by phorbol ester.

Its function is as follows. This protein causes differentiation of brain cells, stimulation of neural regeneration, and inhibition of proliferation of tumor cells. The sequence is that of Glia maturation factor beta (Gmfb) from Rattus norvegicus (Rat).